A 159-amino-acid polypeptide reads, in one-letter code: NADH-quinone oxidoreductase subunit B 2 (159 aa).

Cys-37, Cys-38, Cys-102, and Cys-132 together coordinate [4Fe-4S] cluster.

It belongs to the complex I 20 kDa subunit family. As to quaternary structure, NDH-1 is composed of 14 different subunits. Subunits NuoB, C, D, E, F, and G constitute the peripheral sector of the complex. The cofactor is [4Fe-4S] cluster.

It localises to the cell inner membrane. The enzyme catalyses a quinone + NADH + 5 H(+)(in) = a quinol + NAD(+) + 4 H(+)(out). Its function is as follows. NDH-1 shuttles electrons from NADH, via FMN and iron-sulfur (Fe-S) centers, to quinones in the respiratory chain. Couples the redox reaction to proton translocation (for every two electrons transferred, four hydrogen ions are translocated across the cytoplasmic membrane), and thus conserves the redox energy in a proton gradient. The chain is NADH-quinone oxidoreductase subunit B 2 from Azoarcus sp. (strain BH72).